The primary structure comprises 50 residues: MARYRCCRSQSRSRCYRQRRSRRRKRQSCQTQRRAMRCCRRRSRLRRRRH.

It belongs to the protamine P1 family. In terms of assembly, cross-linked by interchain disulfide bonds around the DNA-helix. As to expression, testis.

The protein resides in the nucleus. It is found in the chromosome. Its function is as follows. Protamines substitute for histones in the chromatin of sperm during the haploid phase of spermatogenesis. They compact sperm DNA into a highly condensed, stable and inactive complex. In Pan paniscus (Pygmy chimpanzee), this protein is Sperm protamine P1 (PRM1).